The following is a 240-amino-acid chain: MVLSPNQNQKIINPIEESPTVTQELSENIVLTTVDDLYNWAKLSSLWPLLYGTACCFIEFAALIGSRFDFDRFGLVPRSSPRQADLLITAGTITMKYTPTLVRLYEQMPEPKYVIAMGACTITGGMFSMDSPTAVRGVDKLIPVDVYIPGCPPRPEAIIDAVIKLRKKIANDSLQERGQLQQTHRYYCVKHNMKVVEPILTGQYLQTSDRKAVPKELAEAIGMPVSPALQAIPKEEVSLG.

Positions 55, 56, 120, and 151 each coordinate [4Fe-4S] cluster.

This sequence belongs to the complex I 20 kDa subunit family. In terms of assembly, NDH-1 can be composed of about 15 different subunits; different subcomplexes with different compositions have been identified which probably have different functions. The cofactor is [4Fe-4S] cluster.

It localises to the cellular thylakoid membrane. It carries out the reaction a plastoquinone + NADH + (n+1) H(+)(in) = a plastoquinol + NAD(+) + n H(+)(out). The catalysed reaction is a plastoquinone + NADPH + (n+1) H(+)(in) = a plastoquinol + NADP(+) + n H(+)(out). Functionally, NDH-1 shuttles electrons from an unknown electron donor, via FMN and iron-sulfur (Fe-S) centers, to quinones in the respiratory and/or the photosynthetic chain. The immediate electron acceptor for the enzyme in this species is believed to be plastoquinone. Couples the redox reaction to proton translocation, and thus conserves the redox energy in a proton gradient. Cyanobacterial NDH-1 also plays a role in inorganic carbon-concentration. The sequence is that of NAD(P)H-quinone oxidoreductase subunit K from Trichodesmium erythraeum (strain IMS101).